The primary structure comprises 341 residues: N-acetyl-gamma-glutamyl-phosphate reductase (341 aa).

Cys148 is a catalytic residue.

Belongs to the NAGSA dehydrogenase family. Type 1 subfamily.

Its subcellular location is the cytoplasm. It catalyses the reaction N-acetyl-L-glutamate 5-semialdehyde + phosphate + NADP(+) = N-acetyl-L-glutamyl 5-phosphate + NADPH + H(+). It functions in the pathway amino-acid biosynthesis; L-arginine biosynthesis; N(2)-acetyl-L-ornithine from L-glutamate: step 3/4. Its function is as follows. Catalyzes the NADPH-dependent reduction of N-acetyl-5-glutamyl phosphate to yield N-acetyl-L-glutamate 5-semialdehyde. This is N-acetyl-gamma-glutamyl-phosphate reductase from Pseudothermotoga lettingae (strain ATCC BAA-301 / DSM 14385 / NBRC 107922 / TMO) (Thermotoga lettingae).